The sequence spans 224 residues: Peptidyl-tRNA hydrolase (224 aa).

Residue tyrosine 27 coordinates tRNA. Histidine 32 acts as the Proton acceptor in catalysis. TRNA contacts are provided by tyrosine 78, asparagine 80, and asparagine 126. Positions 203–215 (LSGPSSDLDGSNP) are enriched in low complexity. The disordered stretch occupies residues 203-224 (LSGPSSDLDGSNPAPGHGEASS).

The protein belongs to the PTH family. Monomer.

The protein resides in the cytoplasm. The enzyme catalyses an N-acyl-L-alpha-aminoacyl-tRNA + H2O = an N-acyl-L-amino acid + a tRNA + H(+). Its function is as follows. Hydrolyzes ribosome-free peptidyl-tRNAs (with 1 or more amino acids incorporated), which drop off the ribosome during protein synthesis, or as a result of ribosome stalling. Functionally, catalyzes the release of premature peptidyl moieties from peptidyl-tRNA molecules trapped in stalled 50S ribosomal subunits, and thus maintains levels of free tRNAs and 50S ribosomes. In Synechococcus sp. (strain JA-2-3B'a(2-13)) (Cyanobacteria bacterium Yellowstone B-Prime), this protein is Peptidyl-tRNA hydrolase.